The chain runs to 210 residues: Probable GTP-binding protein EngB (210 aa).

The EngB-type G domain maps to 25–199; it reads CGIEVAFAGR…RQKLDSWFSE (175 aa). GTP-binding positions include 33 to 40, 60 to 64, 78 to 81, 145 to 148, and 178 to 180; these read GRSNAGKS, GRTQL, DLPG, TKAD, and FSS. Mg(2+) contacts are provided by Ser40 and Thr62.

The protein belongs to the TRAFAC class TrmE-Era-EngA-EngB-Septin-like GTPase superfamily. EngB GTPase family. Requires Mg(2+) as cofactor.

Its function is as follows. Necessary for normal cell division and for the maintenance of normal septation. This is Probable GTP-binding protein EngB from Salmonella paratyphi C (strain RKS4594).